Here is a 59-residue protein sequence, read N- to C-terminus: U-reduvitoxin-Pr6a (59 aa).

A signal peptide spans 1–19; that stretch reads MKVFLLTILLCFLIAYCAG. 3 disulfide bridges follow: Cys-31/Cys-46, Cys-38/Cys-51, and Cys-45/Cys-58.

Belongs to the venom Ptu1-like knottin family. Expressed by the venom gland.

The protein resides in the secreted. Binds reversibly and blocks P/Q-type voltage-gated calcium channels (Cav). This is U-reduvitoxin-Pr6a from Platymeris rhadamanthus (Red spot assassin bug).